Here is a 685-residue protein sequence, read N- to C-terminus: Probable cysteine desulfurase (685 aa).

Residues 1–282 are cargo-loading domain; it reads MTRSPCSTTS…RDEHEVFDVA (282 aa). Disordered stretches follow at residues 48-135 and 162-185; these read SIRP…TSAG and PTPA…VPDT. Residues 71–85 are compositionally biased toward low complexity; sequence ATAATSAGRTAAGTA. The span at 102–121 shows a compositional bias: pro residues; it reads LPPPASPAPEAPPQAAPPAP. The segment covering 122 to 135 has biased composition (low complexity); the sequence is RGSAPDATAATSAG. Pro residues predominate over residues 164–178; that stretch reads PAGPEAPPQSAPPAP. Lysine 502 carries the N6-(pyridoxal phosphate)lysine modification. Cysteine 640 acts as the Cysteine persulfide intermediate in catalysis.

The protein belongs to the class-V pyridoxal-phosphate-dependent aminotransferase family. Csd subfamily. In terms of assembly, isolated from bacteria in a complex with encapsulin 2A (AC I3NID5), strongly suggesting it is found in a type 2A encapsulin nanocompartment. There are 1-2 copies of this protein in each encapsulin shell. It depends on pyridoxal 5'-phosphate as a cofactor.

Its subcellular location is the encapsulin nanocompartment. The protein localises to the cell membrane. It catalyses the reaction (sulfur carrier)-H + L-cysteine = (sulfur carrier)-SH + L-alanine. Functionally, cargo protein of a type 2A encapsulin nanocompartment involved in sulfur metabolism. Cysteine desulfurases mobilize the sulfur from L-cysteine to yield L-alanine, an essential step in sulfur metabolism for biosynthesis of a variety of sulfur-containing biomolecules. The polypeptide is Probable cysteine desulfurase (Mycolicibacterium paratuberculosis (strain ATCC BAA-968 / K-10) (Mycobacterium paratuberculosis)).